Reading from the N-terminus, the 191-residue chain is ECF RNA polymerase sigma factor ShbA (191 aa).

The segment at 27–98 is sigma-70 factor domain-2; it reads LLAHVHPLAL…HKVADLQRAA (72 aa). The disordered stretch occupies residues 100–122; it reads RHPGSTAVPSDEMPERPDDSLGP. Basic and acidic residues predominate over residues 112 to 122; that stretch reads MPERPDDSLGP. Residues 138–187 are sigma-70 factor domain-4; that stretch reads LLANLPENQRELLVLRVAVGLTAEETGQMLGMSPGAVRVAQHRALSRLRA. The H-T-H motif DNA-binding region spans 160–179; it reads AEETGQMLGMSPGAVRVAQH.

This sequence belongs to the sigma-70 factor family. ECF subfamily.

Functionally, sigma factors are initiation factors that promote the attachment of RNA polymerase to specific initiation sites and are then released. Extracytoplasmic function (ECF) sigma factors are held in an inactive form by an anti-sigma factor until released. This alternative sigma factor governs the transcription of the principal sigma factor HrdB (SigA) throughout growth. Acts by binding to the promoter region. In Streptomyces griseus subsp. griseus (strain JCM 4626 / CBS 651.72 / NBRC 13350 / KCC S-0626 / ISP 5235), this protein is ECF RNA polymerase sigma factor ShbA.